The chain runs to 107 residues: Theromyzin (107 aa).

An N-terminal signal peptide occupies residues 1 to 21 (MHAKIILALFLGMTAFLAVQA).

In terms of tissue distribution, coelomic liquid (at protein level). Expressed in large fat cells in contact with coelomic cavities, in intestinal epithelia and at the epidermis level.

It localises to the secreted. Has bacteriostatic activity against M.luteus. No activity toward E.coli and F.oxysporum. This is Theromyzin from Theromyzon tessulatum (Duck leech).